A 495-amino-acid chain; its full sequence is SKA complex subunit 3 (495 aa).

Residues 119-135 (TKEAEERAERDAEKLDA) are compositionally biased toward basic and acidic residues. A disordered region spans residues 119–165 (TKEAEERAERDAEKLDAAEEDEETERGDCDKVDQSVTPEKMPPPVDQ). Serine 295 is modified (phosphoserine). Residues 355-368 (KEDREEESKIHSES) are compositionally biased toward basic and acidic residues. The disordered stretch occupies residues 355-391 (KEDREEESKIHSESQENSLRLPDLSTTNGTSWNDAPE). Residues 378–387 (LSTTNGTSWN) are compositionally biased toward polar residues.

It belongs to the SKA3 family. Component of the SKA complex, composed of ska1, ska2 and ska3.

Its subcellular location is the cytoplasm. It localises to the cytoskeleton. The protein localises to the spindle. It is found in the chromosome. The protein resides in the centromere. Its subcellular location is the kinetochore. In terms of biological role, component of the SKA complex, a microtubule plus end-binding complex of the outer kinetochore that stabilizes spindle microtubule-kinetochore attachments, promotes alignment of chromosomes at the mitotic spindle equator (chromosome congression) and assists suppression of the spindle assembly checkpoint. Kinetochores, consisting of a centromere-associated inner segment and a microtubule-contacting outer segment, play a crucial role in chromosome segregation by mediating the physical connection between centromeric DNA and spindle microtubules. The outer kinetochore is made up of the ten-subunit KMN network complex, comprising the MIS12, NDC80 and KNL1 complexes, and auxiliary microtubule-associated components such as the SKA complex; together they connect the outer kinetochore with the inner kinetochore, bind microtubules, and mediate interactions with mitotic checkpoint proteins that delay anaphase until chromosomes are bioriented on the spindle. The SKA complex is loaded onto bioriented kinetochores and it facilitates chromosome congression by stabilizing microtubules, and end-on attachment of the NDC80 complex to depolymerizing spindle microtubules, thereby assisting the poleward-moving kinetochore in withstanding microtubule pulling forces. The complex associates with dynamic microtubule plus-ends and can track both depolymerizing and elongating microtubules. The complex recruits protein phosphatase 1 (PP1) to the kinetochore in prometaphase and metaphase, to oppose spindle assembly checkpoint signaling and promote the onset of anaphase. Within the complex, binds microtubules but with a much lower affinity than SKA1. During meiosis the SKA complex stabilizes the meiotic spindle and is required for its migration to the cortex. This chain is SKA complex subunit 3 (ska3), found in Danio rerio (Zebrafish).